The chain runs to 485 residues: Glucose-6-phosphate 1-dehydrogenase (485 aa).

NADP(+) is bound by residues Arg-46, 89–90 (DI), and Lys-144. Residues His-174, Lys-178, Glu-212, and Asp-231 each coordinate substrate. The active-site Proton acceptor is His-236. Lys-334 is a binding site for substrate.

Belongs to the glucose-6-phosphate dehydrogenase family.

The enzyme catalyses D-glucose 6-phosphate + NADP(+) = 6-phospho-D-glucono-1,5-lactone + NADPH + H(+). Its pathway is carbohydrate degradation; pentose phosphate pathway; D-ribulose 5-phosphate from D-glucose 6-phosphate (oxidative stage): step 1/3. Its function is as follows. Catalyzes the oxidation of glucose 6-phosphate to 6-phosphogluconolactone. In Zymomonas mobilis subsp. mobilis (strain ATCC 31821 / ZM4 / CP4), this protein is Glucose-6-phosphate 1-dehydrogenase.